Reading from the N-terminus, the 221-residue chain is Leucine rich adaptor protein 1-like (221 aa).

M1 carries the N-acetylmethionine modification. The segment at 24–81 (LARSLRGEELAPREGAADPSGVGGSCSSSSSCSSFAPSVSSSSSSSPASGSPRRSHPS) is disordered. Positions 28–39 (LRGEELAPREGA) are enriched in basic and acidic residues. Over residues 48–75 (SCSSSSSCSSFAPSVSSSSSSSPASGSP) the composition is skewed to low complexity.

The chain is Leucine rich adaptor protein 1-like (Lurap1l) from Mus musculus (Mouse).